Reading from the N-terminus, the 336-residue chain is DNA-directed RNA polymerase subunit alpha (336 aa).

The interval 1–226 (MLIAQRPTLS…ELFGLARELN (226 aa)) is alpha N-terminal domain (alpha-NTD). The tract at residues 241 to 336 (AALAADMALP…DDAAFSDDEL (96 aa)) is alpha C-terminal domain (alpha-CTD).

Belongs to the RNA polymerase alpha chain family. Homodimer. The RNAP catalytic core consists of 2 alpha, 1 beta, 1 beta' and 1 omega subunit. When a sigma factor is associated with the core the holoenzyme is formed, which can initiate transcription.

It carries out the reaction RNA(n) + a ribonucleoside 5'-triphosphate = RNA(n+1) + diphosphate. DNA-dependent RNA polymerase catalyzes the transcription of DNA into RNA using the four ribonucleoside triphosphates as substrates. The protein is DNA-directed RNA polymerase subunit alpha of Arthrobacter sp. (strain FB24).